Reading from the N-terminus, the 211-residue chain is Thiamine-phosphate synthase (211 aa).

4-amino-2-methyl-5-(diphosphooxymethyl)pyrimidine is bound by residues Q43 to K47 and N75. Mg(2+) is bound by residues D76 and D95. 4-amino-2-methyl-5-(diphosphooxymethyl)pyrimidine is bound at residue S114. A 2-[(2R,5Z)-2-carboxy-4-methylthiazol-5(2H)-ylidene]ethyl phosphate-binding site is contributed by T140–S142. A 4-amino-2-methyl-5-(diphosphooxymethyl)pyrimidine-binding site is contributed by K143. Residues G170 and I190 to S191 each bind 2-[(2R,5Z)-2-carboxy-4-methylthiazol-5(2H)-ylidene]ethyl phosphate.

Belongs to the thiamine-phosphate synthase family. It depends on Mg(2+) as a cofactor.

The enzyme catalyses 2-[(2R,5Z)-2-carboxy-4-methylthiazol-5(2H)-ylidene]ethyl phosphate + 4-amino-2-methyl-5-(diphosphooxymethyl)pyrimidine + 2 H(+) = thiamine phosphate + CO2 + diphosphate. The catalysed reaction is 2-(2-carboxy-4-methylthiazol-5-yl)ethyl phosphate + 4-amino-2-methyl-5-(diphosphooxymethyl)pyrimidine + 2 H(+) = thiamine phosphate + CO2 + diphosphate. It carries out the reaction 4-methyl-5-(2-phosphooxyethyl)-thiazole + 4-amino-2-methyl-5-(diphosphooxymethyl)pyrimidine + H(+) = thiamine phosphate + diphosphate. Its pathway is cofactor biosynthesis; thiamine diphosphate biosynthesis; thiamine phosphate from 4-amino-2-methyl-5-diphosphomethylpyrimidine and 4-methyl-5-(2-phosphoethyl)-thiazole: step 1/1. In terms of biological role, condenses 4-methyl-5-(beta-hydroxyethyl)thiazole monophosphate (THZ-P) and 2-methyl-4-amino-5-hydroxymethyl pyrimidine pyrophosphate (HMP-PP) to form thiamine monophosphate (TMP). The sequence is that of Thiamine-phosphate synthase from Coprothermobacter proteolyticus (strain ATCC 35245 / DSM 5265 / OCM 4 / BT).